Reading from the N-terminus, the 510-residue chain is UDP-N-acetylmuramyl-tripeptide synthetase (510 aa).

Residue Ser-36 participates in UDP-N-acetyl-alpha-D-muramoyl-L-alanyl-D-glutamate binding. An ATP-binding site is contributed by Gly-113 to Thr-119. Residues Thr-159–Thr-160, Ser-186, and Arg-194 each bind UDP-N-acetyl-alpha-D-muramoyl-L-alanyl-D-glutamate. Lys-228 carries the N6-carboxylysine modification.

Belongs to the MurCDEF family. MurE subfamily. Carboxylation is probably crucial for Mg(2+) binding and, consequently, for the gamma-phosphate positioning of ATP.

It is found in the cytoplasm. It participates in cell wall biogenesis; peptidoglycan biosynthesis. In terms of biological role, catalyzes the addition of an amino acid to the nucleotide precursor UDP-N-acetylmuramoyl-L-alanyl-D-glutamate (UMAG) in the biosynthesis of bacterial cell-wall peptidoglycan. This is UDP-N-acetylmuramyl-tripeptide synthetase from Ligilactobacillus salivarius (strain UCC118) (Lactobacillus salivarius).